Here is a 418-residue protein sequence, read N- to C-terminus: Tyrosine--tRNA ligase 1 (418 aa).

Tyr34 contacts L-tyrosine. A 'HIGH' region motif is present at residues 39–48 (PTADSLHLGH). Positions 169 and 173 each coordinate L-tyrosine. The short motif at 229–233 (KFGKS) is the 'KMSKS' region element. Position 232 (Lys232) interacts with ATP. Residues 352-418 (LNIVELLVNA…GKKKNFVLTY (67 aa)) enclose the S4 RNA-binding domain.

Belongs to the class-I aminoacyl-tRNA synthetase family. TyrS type 1 subfamily. Homodimer.

The protein resides in the cytoplasm. It catalyses the reaction tRNA(Tyr) + L-tyrosine + ATP = L-tyrosyl-tRNA(Tyr) + AMP + diphosphate + H(+). Catalyzes the attachment of tyrosine to tRNA(Tyr) in a two-step reaction: tyrosine is first activated by ATP to form Tyr-AMP and then transferred to the acceptor end of tRNA(Tyr). The chain is Tyrosine--tRNA ligase 1 from Streptococcus thermophilus (strain CNRZ 1066).